The sequence spans 348 residues: Ninja-family protein AFP2 (348 aa).

A disordered region spans residues 186-272 (DSDGGGATGG…VDRKGKGMAT (87 aa)). Residues 187-197 (SDGGGATGGGS) show a composition bias toward gly residues. 2 stretches are compositionally biased toward polar residues: residues 207–216 (KNQQGSSNSC) and 228–244 (CSSNSGSQGTERPSVTR). The segment covering 247–267 (KVNENENEKRVRSEDSVDRKG) has biased composition (basic and acidic residues).

Belongs to the Ninja family. In terms of assembly, forms a homodimer and heterodimer with AFP1 and AFP3. Interacts with ABI5/DPBF1, DPBF2, AREB3/DPBF3, EEL/DPBF4, ABF1, ABF3/DPBF5 and ABF4/AREB2.

It localises to the nucleus. Functionally, acts as a negative regulator of abscisic acid (ABA) response during germination through the ubiquitin-mediated proteolysis of ABI5/DPBF1. The protein is Ninja-family protein AFP2 (AFP2) of Arabidopsis thaliana (Mouse-ear cress).